The sequence spans 117 residues: Large ribosomal subunit protein bL19 (117 aa).

The protein belongs to the bacterial ribosomal protein bL19 family.

Functionally, this protein is located at the 30S-50S ribosomal subunit interface and may play a role in the structure and function of the aminoacyl-tRNA binding site. The protein is Large ribosomal subunit protein bL19 of Cutibacterium acnes (strain DSM 16379 / KPA171202) (Propionibacterium acnes).